The chain runs to 351 residues: Dihydroorotate dehydrogenase (quinone) (351 aa).

Residues 67–71 (AGFDK) and Thr91 each bind FMN. Position 71 (Lys71) interacts with substrate. 116–120 (NAMGF) is a substrate binding site. Asn145 and Asn178 together coordinate FMN. Asn178 is a substrate binding site. Catalysis depends on Ser181, which acts as the Nucleophile. Asn183 serves as a coordination point for substrate. The FMN site is built by Lys214 and Thr242. 243–244 (NT) is a substrate binding site. Residues Gly262, Gly291, and 312–313 (YS) contribute to the FMN site.

It belongs to the dihydroorotate dehydrogenase family. Type 2 subfamily. In terms of assembly, monomer. The cofactor is FMN.

It is found in the cell membrane. It carries out the reaction (S)-dihydroorotate + a quinone = orotate + a quinol. The protein operates within pyrimidine metabolism; UMP biosynthesis via de novo pathway; orotate from (S)-dihydroorotate (quinone route): step 1/1. Its function is as follows. Catalyzes the conversion of dihydroorotate to orotate with quinone as electron acceptor. This Helicobacter pylori (strain ATCC 700392 / 26695) (Campylobacter pylori) protein is Dihydroorotate dehydrogenase (quinone) (pyrD).